A 493-amino-acid polypeptide reads, in one-letter code: Glutamyl-tRNA(Gln) amidotransferase subunit A (493 aa).

Active-site charge relay system residues include K79 and S159. S183 functions as the Acyl-ester intermediate in the catalytic mechanism.

The protein belongs to the amidase family. GatA subfamily. Heterotrimer of A, B and C subunits.

It carries out the reaction L-glutamyl-tRNA(Gln) + L-glutamine + ATP + H2O = L-glutaminyl-tRNA(Gln) + L-glutamate + ADP + phosphate + H(+). In terms of biological role, allows the formation of correctly charged Gln-tRNA(Gln) through the transamidation of misacylated Glu-tRNA(Gln) in organisms which lack glutaminyl-tRNA synthetase. The reaction takes place in the presence of glutamine and ATP through an activated gamma-phospho-Glu-tRNA(Gln). The chain is Glutamyl-tRNA(Gln) amidotransferase subunit A from Brucella anthropi (strain ATCC 49188 / DSM 6882 / CCUG 24695 / JCM 21032 / LMG 3331 / NBRC 15819 / NCTC 12168 / Alc 37) (Ochrobactrum anthropi).